The sequence spans 262 residues: MEEAILVPCVLGLLLLPILAMLMALCVHCHRLPGSYDSTSSDSLYPRGIQFKRPHTVAPWPPAYPPVTSYPPLSQPDLLPIPRSPQPLGGSHRTPSSRRDSDGANSVASYENEGASGIRGAQAGWGVWGPSWTRLTPVSLPPEPACEDADEDEDDYHNPGYLVVLPDSTPATSTAAPSAPALSTPGIRDSAFSMESIDDYVNVPESGESAEASLDGSREYVNVSQELHPGAAKTEPAALSSQEAEEVEEEGAPDYENLQELN.

Over 1 to 4 the chain is Extracellular; the sequence is MEEA. The chain crosses the membrane as a helical; Signal-anchor for type III membrane protein span at residues 5 to 27; the sequence is ILVPCVLGLLLLPILAMLMALCV. Residues Cys26 and Cys29 are each lipidated (S-palmitoyl cysteine). The Cytoplasmic segment spans residues 28–262; that stretch reads HCHRLPGSYD…PDYENLQELN (235 aa). The residue at position 39 (Thr39) is a Phosphothreonine. Residues Ser40, Ser41, Ser43, Ser84, Ser101, Ser106, and Ser109 each carry the phosphoserine modification. Positions 69-115 are disordered; sequence SYPPLSQPDLLPIPRSPQPLGGSHRTPSSRRDSDGANSVASYENEGA. 5 positions are modified to phosphotyrosine: Tyr110, Tyr156, Tyr161, Tyr200, and Tyr220. An interaction with PLCG1 region spans residues 161 to 164; sequence YLVV. 2 interaction with GRB2, GRAP2 and PIK3R1 regions span residues 200-203 and 220-223; these read YVNV. The tract at residues 206 to 262 is disordered; it reads SGESAEASLDGSREYVNVSQELHPGAAKTEPAALSSQEAEEVEEEGAPDYENLQELN. Phosphoserine is present on residues Ser224, Ser240, and Ser241. Positions 243-253 are enriched in acidic residues; that stretch reads EAEEVEEEGAP. The residue at position 255 (Tyr255) is a Phosphotyrosine.

In terms of assembly, when phosphorylated, interacts directly with the PIK3R1 subunit of phosphoinositide 3-kinase and the SH2 domains of GRB2, GRAP, GRAP2, PLCG1 and PLCG2. Interacts indirectly with CBL, SOS, VAV, and LCP2. Interacts with SHB, SKAP2 and CLNK. Interacts with FCGR1A. Interacts with GRB2, PLCG1 and THEMIS upon TCR activation in thymocytes. Interacts with THEMIS2. (Microbial infection) Interacts with herpes virus 1/HHV-1 protein US3; this interaction prevents the interaction between LAT and TRAF6. Post-translationally, phosphorylated on tyrosines by ZAP70 upon TCR activation, or by SYK upon other immunoreceptor activation; which leads to the recruitment of multiple signaling molecules. Is one of the most prominently tyrosine-phosphorylated proteins detected following TCR engagement. May be dephosphorylated by PTPRJ. Phosphorylated by ITK leading to the recruitment of VAV1 to LAT-containing complexes. In terms of processing, palmitoylation of Cys-26 and Cys-29 is required for raft targeting and efficient phosphorylation. 'Lys-63'-linked ubiquitinated by TRAF6. As to expression, expressed in thymus, T-cells, NK cells, mast cells and, at lower levels, in spleen. Present in T-cells but not B-cells (at protein level).

The protein localises to the cell membrane. Functionally, required for TCR (T-cell antigen receptor)- and pre-TCR-mediated signaling, both in mature T-cells and during their development. Involved in FCGR3 (low affinity immunoglobulin gamma Fc region receptor III)-mediated signaling in natural killer cells and FCER1 (high affinity immunoglobulin epsilon receptor)-mediated signaling in mast cells. Couples activation of these receptors and their associated kinases with distal intracellular events such as mobilization of intracellular calcium stores, PKC activation, MAPK activation or cytoskeletal reorganization through the recruitment of PLCG1, GRB2, GRAP2, and other signaling molecules. This Homo sapiens (Human) protein is Linker for activation of T-cells family member 1 (LAT).